The primary structure comprises 158 residues: Small ribosomal subunit protein bS16 (158 aa).

The span at 111–121 (AAAGLAEAPTK) shows a compositional bias: low complexity. Residues 111–158 (AAAGLAEAPTKPAKKAPKAEAAPKTEAAPKADAPKTEEQAGAGSGEQG) form a disordered region. Basic and acidic residues predominate over residues 127–148 (PKAEAAPKTEAAPKADAPKTEE).

The protein belongs to the bacterial ribosomal protein bS16 family.

In Salinispora arenicola (strain CNS-205), this protein is Small ribosomal subunit protein bS16.